Reading from the N-terminus, the 667-residue chain is YTH domain-containing protein ECT2 (667 aa).

Disordered regions lie at residues 264–305 and 379–398; these read QRPV…PSSV and NELN…GNLD. Low complexity predominate over residues 267–285; it reads VSGSGVASSYSKSSTVPSS. Residues 286–305 show a composition bias toward polar residues; that stretch reads RNQNYRSNSHYTSVHQPSSV. In terms of domain architecture, YTH spans 442-579; sequence AMFFIIKSYS…EQGLKIVKIF (138 aa). RNA contacts are provided by residues 448–450, aspartate 454, 464–465, asparagine 497, tryptophan 521, tryptophan 526, and tryptophan 534; these read KSY and WA. Residues 606 to 667 are disordered; sequence KAKQTQKQVS…VTGDVVANGC (62 aa). Residues 614–627 are compositionally biased toward basic and acidic residues; that stretch reads VSEEKVTDEKKESA. Positions 628–639 are enriched in low complexity; the sequence is TAESASKESPAA.

In terms of assembly, interacts (via C-terminus) with CIPK1. In terms of tissue distribution, expressed in the shoot apex, at the sites of leaf formation, and in emerging leaves. Highly expressed in rapidly developing tissues.

It localises to the cytoplasm. It is found in the nucleus. In terms of biological role, specifically recognizes and binds N6-methyladenosine (m6A)-containing RNAs, and regulates mRNA stability. M6A is a modification present at internal sites of mRNAs and some non-coding RNAs and plays a role in mRNA stability and processing. Binds preferentially in the 3'UTRs of target genes. May play dual roles in regulating 3'UTR processing in the nucleus and facilitating mRNA stability in the cytoplasm. Required for the correct timing of leaf formation and normal leaf morphology. Functions redundantly with ECT3. Required for proper trichome branching and morphology. Controls trichome morphology by binding transcripts related to trichome morphogenesis and affecting their stability. This chain is YTH domain-containing protein ECT2, found in Arabidopsis thaliana (Mouse-ear cress).